Consider the following 190-residue polypeptide: Adenine phosphoribosyltransferase (190 aa).

Belongs to the purine/pyrimidine phosphoribosyltransferase family. In terms of assembly, homodimer.

The protein localises to the cytoplasm. It catalyses the reaction AMP + diphosphate = 5-phospho-alpha-D-ribose 1-diphosphate + adenine. Its pathway is purine metabolism; AMP biosynthesis via salvage pathway; AMP from adenine: step 1/1. Its function is as follows. Catalyzes a salvage reaction resulting in the formation of AMP, that is energically less costly than de novo synthesis. This Cupriavidus pinatubonensis (strain JMP 134 / LMG 1197) (Cupriavidus necator (strain JMP 134)) protein is Adenine phosphoribosyltransferase.